A 487-amino-acid chain; its full sequence is UPF0324 membrane protein NE0724 (487 aa).

The next 11 helical transmembrane spans lie at 19-38 (WAVWLGLIMFMASVSSLWGW), 71-93 (PALSLLVTYLVFTALTCLAAWSM), 100-119 (FFIGWTILFIMTWVIWIIGN), 139-161 (LSLGSGFSYLLALLVGLVIGNFF), 181-200 (AIVFLGIKIGVMSIEAAGFI), 204-226 (VMTGVAATFVAYMLFWPIVYALG), 269-291 (VSILVVIFAMFELIILPGFYTAI), 350-369 (IWIDMFIGVWAFVLALVWVY), 389-411 (FPKFVLGYLLVWFSYIMLASSGS), 426-443 (GPMRNMMFMLTFISIGII), and 456-478 (ALLYAIALFGIIAPIAYGVAWIF).

This sequence belongs to the UPF0324 family.

The protein resides in the cell membrane. The sequence is that of UPF0324 membrane protein NE0724 from Nitrosomonas europaea (strain ATCC 19718 / CIP 103999 / KCTC 2705 / NBRC 14298).